The primary structure comprises 207 residues: uncharacterized protein (207 aa).

One can recognise a YrdC-like domain in the interval 14-201; the sequence is ARLINQAVEI…SPVILREGSG (188 aa).

The protein belongs to the SUA5 family.

This is an uncharacterized protein from Haemophilus influenzae (strain ATCC 51907 / DSM 11121 / KW20 / Rd).